The sequence spans 483 residues: MGLVASCFGGLAAYAAESVACCCGSAACSLCCRSCPSCTNSTSTRITYAILFFLSSIAAWIMLDKDVSKGLMKVCCYHSTLFRLVLFTQPAIKTTTNVVPWGELGVMRIMFSVCLFHLFLSLCTIGVSSSKDPRSSLHNGMWFIKLILLVGAMVGSFFISNSFFIGASWSWIGLVGAVLFMIVQFILLVDFAYSWNDSWVGKLEEGSKCAGFGSYRLISATVMLMAFVITLTVLMFHFYTNGDCKLSNFFIGFNLALALLVTLTSMLPSVREALPSSGILQSSVVAAYATYLVWSAVSGVPSTCHPLIAVAPLFLSSRGFLPPLPYVALKPAECGGDAGTNTAAIVIGALLTFISVAYSSIRTSSKSQLGKLGLQQGSNENIYLMDDKAADFDEDDEDRRLQRVVDNEQDAVRYSWSFFHLTFAVAALYLMMVLTEWDSSDADVRIGKGWASVWVQVVSSWVIFLLYGWTMMAPVCLPDRDFS.

The next 11 helical transmembrane spans lie at 43-63 (STRI…WIML), 109-129 (IMFS…GVSS), 146-166 (LILL…FFIG), 169-189 (WSWI…ILLV), 218-238 (ISAT…MFHF), 249-269 (FFIG…MLPS), 274-294 (LPSS…YLVW), 295-315 (SAVS…PLFL), 338-358 (AGTN…SVAY), 414-434 (YSWS…MMVL), and 457-477 (VVSS…PVCL).

This sequence belongs to the TDE1 family.

It is found in the endoplasmic reticulum membrane. Enhances the incorporation of serine into phosphatidylserine and sphingolipids. This is Probable serine incorporator (serinc) from Monosiga brevicollis (Choanoflagellate).